We begin with the raw amino-acid sequence, 690 residues long: UvrABC system protein C (690 aa).

Residues 1–60 (MTTDSSDPAKPAGPGQPPGSGADTRPGGLATGQDVDPATIETDEDDEARLPDVPDEPTDA) are disordered. Positions 41–58 (ETDEDDEARLPDVPDEPT) are enriched in acidic residues. One can recognise a GIY-YIG domain in the interval 82-160 (TSPGVYRMMN…IKQLRPRFNV (79 aa)). In terms of domain architecture, UVR spans 270–305 (RAVKEELAREMEKASGDLAFERAALYRDRLAALSAI).

The protein belongs to the UvrC family. In terms of assembly, interacts with UvrB in an incision complex.

It is found in the cytoplasm. Functionally, the UvrABC repair system catalyzes the recognition and processing of DNA lesions. UvrC both incises the 5' and 3' sides of the lesion. The N-terminal half is responsible for the 3' incision and the C-terminal half is responsible for the 5' incision. This chain is UvrABC system protein C, found in Nitrobacter hamburgensis (strain DSM 10229 / NCIMB 13809 / X14).